The sequence spans 765 residues: Eukaryotic translation initiation factor 3 subunit B (765 aa).

Residues 1–136 (MKNFLPRTLK…LFVECGSMND (136 aa)) are sufficient for interaction with HCR1 and TIF32. The sufficient for interaction with PIC8 stretch occupies residues 28-261 (RNTQLKRSKI…GVTAWGGPNF (234 aa)). S61 is modified (phosphoserine). Y67 bears the Phosphotyrosine mark. The 86-residue stretch at 77 to 162 (QYIVVNGAPV…HRLFLYTMKD (86 aa)) folds into the RRM domain. S671 carries the post-translational modification Phosphoserine.

The protein belongs to the eIF-3 subunit B family. Component of the eukaryotic translation initiation factor 3 (eIF-3) complex.

Its subcellular location is the cytoplasm. Its function is as follows. RNA-binding component of the eukaryotic translation initiation factor 3 (eIF-3) complex, which is involved in protein synthesis of a specialized repertoire of mRNAs and, together with other initiation factors, stimulates binding of mRNA and methionyl-tRNAi to the 40S ribosome. The eIF-3 complex specifically targets and initiates translation of a subset of mRNAs involved in cell proliferation. This Saccharomyces cerevisiae (strain YJM789) (Baker's yeast) protein is Eukaryotic translation initiation factor 3 subunit B.